A 502-amino-acid polypeptide reads, in one-letter code: Maturase K (502 aa).

It belongs to the intron maturase 2 family. MatK subfamily.

The protein localises to the plastid. It is found in the chloroplast. Functionally, usually encoded in the trnK tRNA gene intron. Probably assists in splicing its own and other chloroplast group II introns. The protein is Maturase K of Brassica campestris (Field mustard).